A 365-amino-acid chain; its full sequence is MTGDYKEYKGYALITGGAGFIGSNFLDYAVDKYPDFHFTCIDKLSYVSNYTTVFLSKVLNQPNFRFLEMDLATNYKFLYQFMVEDSEINKITHIINFAAESSVDRSFIDPLYFTKNNILSTQNLLECVRILLGKKEELRNRLNFVHVSTDEVYGEQDENASVDEKSKLNPTSPYAASKAAVDLIIQSYRYSYKISVTVIRANNVYGPRQYEEKLIPMTLGKLKKFINQKSQKIMQDKITLHGDGLHKRKYLHIYDFINAIDLVWMKQGSEVYHSTLESKMSGQIFNIGSDDEIDNLSLVKFICDYFLYRKLSLKNLDYSKYITFVQDRNYNDSRYSLNYEKIKSLGWRPQIPLETGLRKLIDEYY.

Belongs to the NAD(P)-dependent epimerase/dehydratase family.

Its subcellular location is the cytoplasm. The protein localises to the nucleus. This is an uncharacterized protein from Schizosaccharomyces pombe (strain 972 / ATCC 24843) (Fission yeast).